Consider the following 252-residue polypeptide: Putative cytosolic acyl coenzyme A thioester hydrolase-like (252 aa).

HotDog ACOT-type domains follow at residues 1-90 and 146-252; these read MIKE…LSLT and SYSQ…SVFT.

As to quaternary structure, homodimer. In terms of tissue distribution, expressed in all tissues examined. Up-regulated in nasopharyngeal carcinoma (at protein level).

The protein resides in the cytoplasm. The enzyme catalyses hexadecanoyl-CoA + H2O = hexadecanoate + CoA + H(+). In terms of biological role, acyl-CoA thioesterases are a group of enzymes that catalyze the hydrolysis of acyl-CoAs to the free fatty acid and coenzyme A (CoASH), providing the potential to regulate intracellular levels of acyl-CoAs, free fatty acids and CoASH. The sequence is that of Putative cytosolic acyl coenzyme A thioester hydrolase-like (ACOT7L) from Homo sapiens (Human).